The following is a 284-amino-acid chain: L-ribulose-5-phosphate 3-epimerase UlaE (284 aa).

This sequence belongs to the L-ribulose-5-phosphate 3-epimerase family.

It catalyses the reaction L-ribulose 5-phosphate = L-xylulose 5-phosphate. The protein operates within cofactor degradation; L-ascorbate degradation; D-xylulose 5-phosphate from L-ascorbate: step 3/4. Catalyzes the isomerization of L-xylulose-5-phosphate to L-ribulose-5-phosphate. Is involved in the anaerobic L-ascorbate utilization. The protein is L-ribulose-5-phosphate 3-epimerase UlaE of Salmonella dublin (strain CT_02021853).